The chain runs to 122 residues: Small ribosomal subunit protein uS13 (122 aa).

The disordered stretch occupies residues 99–122 (RGQRTHTNARTRKGPAKAIAGKKK).

This sequence belongs to the universal ribosomal protein uS13 family. Part of the 30S ribosomal subunit. Forms a loose heterodimer with protein S19. Forms two bridges to the 50S subunit in the 70S ribosome.

In terms of biological role, located at the top of the head of the 30S subunit, it contacts several helices of the 16S rRNA. In the 70S ribosome it contacts the 23S rRNA (bridge B1a) and protein L5 of the 50S subunit (bridge B1b), connecting the 2 subunits; these bridges are implicated in subunit movement. Contacts the tRNAs in the A and P-sites. In Rhodopseudomonas palustris (strain HaA2), this protein is Small ribosomal subunit protein uS13.